The chain runs to 311 residues: Glycerol-3-phosphate dehydrogenase [NAD(P)+] (311 aa).

NADPH contacts are provided by Trp-11, Arg-30, Arg-31, and Lys-95. Residues Lys-95, Gly-123, and Ser-125 each contribute to the sn-glycerol 3-phosphate site. Ala-127 serves as a coordination point for NADPH. Sn-glycerol 3-phosphate contacts are provided by Lys-177, Asp-230, Ser-240, Arg-241, and Asn-242. The Proton acceptor role is filled by Lys-177. Residue Arg-241 participates in NADPH binding. 2 residues coordinate NADPH: Val-265 and Glu-267.

The protein belongs to the NAD-dependent glycerol-3-phosphate dehydrogenase family.

The protein localises to the cytoplasm. It catalyses the reaction sn-glycerol 3-phosphate + NAD(+) = dihydroxyacetone phosphate + NADH + H(+). The catalysed reaction is sn-glycerol 3-phosphate + NADP(+) = dihydroxyacetone phosphate + NADPH + H(+). The protein operates within membrane lipid metabolism; glycerophospholipid metabolism. In terms of biological role, catalyzes the reduction of the glycolytic intermediate dihydroxyacetone phosphate (DHAP) to sn-glycerol 3-phosphate (G3P), the key precursor for phospholipid synthesis. This chain is Glycerol-3-phosphate dehydrogenase [NAD(P)+], found in Bartonella bacilliformis (strain ATCC 35685 / KC583 / Herrer 020/F12,63).